The chain runs to 25 residues: Chlorocatechol 1,2-dioxygenase 1 (25 aa).

Belongs to the intradiol ring-cleavage dioxygenase family. The cofactor is Fe(3+).

The catalysed reaction is 3,5-dichlorocatechol + O2 = (2E,4E)-2,4-dichloromuconate + 2 H(+). It participates in xenobiotic degradation; 2-(2,4-dichlorophenoxy)propanoate degradation. The protein is Chlorocatechol 1,2-dioxygenase 1 (tfdC) of Delftia acidovorans (Pseudomonas acidovorans).